We begin with the raw amino-acid sequence, 264 residues long: Galectin-3 (264 aa).

The interval 1 to 105 (MADSFSLNDA…GAFPGQPGAP (105 aa)) is disordered. Ala2 carries the N-acetylalanine modification. Position 6 is a phosphoserine; by CK1 (Ser6). 8 repeat units span residues 35–43 (YPGAAYPGA), 44–52 (YPGQAPPGA), 53–61 (YPGQAPPGA), 62–70 (YPGQAPPSA), 71–79 (YPGPTAPGA), 80–88 (YPGPTAPGA), 89–97 (YPGQPAPGA), and 98–107 (FPGQPGAPGA). Residues 35–114 (YPGAAYPGAY…PGAYPQCSGG (80 aa)) are 9 X 9 AA tandem repeats of Y-P-G-X(3)-P-[GS]-A. Over residues 37–46 (GAAYPGAYPG) the composition is skewed to low complexity. Residues 47–75 (QAPPGAYPGQAPPGAYPGQAPPSAYPGPT) are compositionally biased toward pro residues. The segment covering 76–105 (APGAYPGPTAPGAYPGQPAPGAFPGQPGAP) has biased composition (low complexity). A 9; truncated repeat occupies 108 to 114 (YPQCSGG). A Galectin domain is found at 132–262 (YDLPLPGGVM…DITLTSANHA (131 aa)). 195-201 (WGKEERQ) provides a ligand contact to a beta-D-galactoside. Phosphoserine is present on Ser202. The Nuclear export signal signature appears at 240–255 (KNLREISQLGISGDIT).

As to quaternary structure, probably forms homo- or heterodimers. Interacts with DMBT1. Interacts with CD6 and ALCAM. Forms a complex with the ITGA3, ITGB1 and CSPG4. Interacts with LGALS3BP, LYPD3, ZFTRAF1 and UACA. Interacts with TRIM16; this interaction mediates autophagy of damage endomembranes. Interacts with and inhibits by binding NCR3/NKp30. The highest levels are found in activated macrophages.

The protein localises to the cytoplasm. Its subcellular location is the nucleus. It is found in the secreted. Functionally, galactose-specific lectin which binds IgE. May mediate with the alpha-3, beta-1 integrin the stimulation by CSPG4 of endothelial cells migration. Together with DMBT1, required for terminal differentiation of columnar epithelial cells during early embryogenesis. In the nucleus: acts as a pre-mRNA splicing factor. Involved in acute inflammatory responses including neutrophil activation and adhesion, chemoattraction of monocytes macrophages, opsonization of apoptotic neutrophils, and activation of mast cells. Together with TRIM16, coordinates the recognition of membrane damage with mobilization of the core autophagy regulators ATG16L1 and BECN1 in response to damaged endomembranes. When secreted, interacts with NK cell-activating receptor NCR3/NKp30 acting as an inhibitory ligand which antagonizes NK cell attack. The protein is Galectin-3 (Lgals3) of Mus musculus (Mouse).